The sequence spans 129 residues: M-zodatoxin-Lt8l (129 aa).

Residues 1 to 20 (MKYFVVXXALVAAFACIAES) form the signal peptide. Residues 21–60 (KPAESEHELAEVEEENELADLEDAVWLEDLADLSDLEETR) constitute a propeptide that is removed on maturation.

Belongs to the cationic peptide 06 (cytoinsectotoxin) family. In terms of tissue distribution, expressed by the venom gland.

The protein resides in the secreted. Functionally, insecticidal, cytolytic and antimicrobial peptide. Forms voltage-dependent, ion-permeable channels in membranes. At high concentration causes cell membrane lysis. This Lachesana tarabaevi (Spider) protein is M-zodatoxin-Lt8l (cit 1-12).